We begin with the raw amino-acid sequence, 272 residues long: Dermonecrotic toxin StSicTox-betaIC1 (272 aa).

The active site involves His5. Mg(2+)-binding residues include Glu25 and Asp27. His41 acts as the Nucleophile in catalysis. Intrachain disulfides connect Cys45–Cys51 and Cys47–Cys191. A Mg(2+)-binding site is contributed by Asp85.

Belongs to the arthropod phospholipase D family. Class II subfamily. Class IIb sub-subfamily. Mg(2+) is required as a cofactor. As to expression, expressed by the venom gland.

It localises to the secreted. The catalysed reaction is an N-(acyl)-sphingosylphosphocholine = an N-(acyl)-sphingosyl-1,3-cyclic phosphate + choline. It carries out the reaction N-hexanoyl-sphing-4-enine-1-phosphocholine = N-(hexanoyl)-sphing-4-enine-1,3-cyclic phosphate + choline. It catalyses the reaction an N-(acyl)-sphingosylphosphoethanolamine = an N-(acyl)-sphingosyl-1,3-cyclic phosphate + ethanolamine. The enzyme catalyses N-dodecanoyl-heptadecasphing-4-enine-1-phosphoethanolamine = N-dodecanoyl-heptadecasphing-4-enine-1,3-cyclic phosphate + ethanolamine. The catalysed reaction is a 1-acyl-sn-glycero-3-phosphoethanolamine = a 1-acyl-sn-glycero-2,3-cyclic phosphate + ethanolamine. It carries out the reaction 1-tetradecanoyl-sn-glycero-3-phosphoethanolamine = 1-tetradecanoyl-sn-glycero-2,3-cyclic phosphate + ethanolamine. Dermonecrotic toxins cleave the phosphodiester linkage between the phosphate and headgroup of certain phospholipids (sphingolipid and lysolipid substrates), forming an alcohol (often choline) and a cyclic phosphate. This toxin acts on lysophosphatidylethanolamine (LPE) and ceramide phosphoethanolamine (CPE) with high activity. This toxin acts on sphingomyelin (SM) with very low activity and is not active on lysophosphatidylserine (LPS), lysophosphatidylcholine (LPC) and lysophosphatidylglycerol (LPG). It acts by transphosphatidylation, releasing exclusively cyclic phosphate as second products. It is not surprising that spider toxins have affinity for ethanolamine-containing sphingolipids since they are common in insect prey. Induces dermonecrosis, hemolysis, increased vascular permeability, edema, inflammatory response, and platelet aggregation. This chain is Dermonecrotic toxin StSicTox-betaIC1, found in Sicarius terrosus (Cave spider).